The chain runs to 373 residues: Homoserine O-acetyltransferase (373 aa).

An AB hydrolase-1 domain is found at 52–356 (NVVMVLHALT…VYGHDGFLVE (305 aa)). The active-site Nucleophile is serine 157. Position 227 (arginine 227) interacts with substrate. Catalysis depends on residues aspartate 320 and histidine 350. Aspartate 351 serves as a coordination point for substrate.

This sequence belongs to the AB hydrolase superfamily. MetX family. As to quaternary structure, homodimer.

The protein localises to the cytoplasm. The catalysed reaction is L-homoserine + acetyl-CoA = O-acetyl-L-homoserine + CoA. Its pathway is amino-acid biosynthesis; L-methionine biosynthesis via de novo pathway; O-acetyl-L-homoserine from L-homoserine: step 1/1. Its function is as follows. Transfers an acetyl group from acetyl-CoA to L-homoserine, forming acetyl-L-homoserine. This Mycobacterium sp. (strain KMS) protein is Homoserine O-acetyltransferase.